The following is a 208-amino-acid chain: Small ribosomal subunit protein eS1 (208 aa).

Belongs to the eukaryotic ribosomal protein eS1 family.

The chain is Small ribosomal subunit protein eS1 from Saccharolobus solfataricus (strain ATCC 35092 / DSM 1617 / JCM 11322 / P2) (Sulfolobus solfataricus).